The sequence spans 406 residues: Flavohemoprotein (406 aa).

In terms of domain architecture, Globin spans 6–144; the sequence is VLLDKKTTEI…IADIFISVEK (139 aa). His-91 is a binding site for heme b. Active-site charge relay system residues include Tyr-101 and Glu-143. The interval 155–406 is reductase; sequence GGWTGFRDFK…LFGPLEPIAK (252 aa). An FAD-binding FR-type domain is found at 158–267; sequence TGFRDFKVIK…SAPAGDFILD (110 aa). Residues Tyr-196 and 212–215 contribute to the FAD site; that span reads RQYS. 280–285 contributes to the NADP(+) binding site; sequence GVGLTP. Position 397-400 (397-400) interacts with FAD; the sequence is LFGP.

It belongs to the globin family. Two-domain flavohemoproteins subfamily. The protein in the C-terminal section; belongs to the flavoprotein pyridine nucleotide cytochrome reductase family. The cofactor is heme b. FAD is required as a cofactor.

The catalysed reaction is 2 nitric oxide + NADPH + 2 O2 = 2 nitrate + NADP(+) + H(+). It catalyses the reaction 2 nitric oxide + NADH + 2 O2 = 2 nitrate + NAD(+) + H(+). Functionally, is involved in NO detoxification in an aerobic process, termed nitric oxide dioxygenase (NOD) reaction that utilizes O(2) and NAD(P)H to convert NO to nitrate, which protects the bacterium from various noxious nitrogen compounds. Therefore, plays a central role in the inducible response to nitrosative stress. The protein is Flavohemoprotein of Oceanobacillus iheyensis (strain DSM 14371 / CIP 107618 / JCM 11309 / KCTC 3954 / HTE831).